Consider the following 448-residue polypeptide: MVMLISLSFKKVIWMNVDPNLTKYMIKAKIYTDGVVEKPDVVGAIFGQTEGLLGDDLDLRDLQKSGKIGRIEVEIDSKKGRTEGYALIPSGLDQVETAILAAALETIDRIGPCKAKVEIANVEDVRVQKRQKIIERAKKIYQDMNSKGDDLSESLVKSVREEVEKSEIISYGEEKLPAGPAINDSDSIIVVEGRNDVLNLLKYGIKNTIAVQGTNIPETVKKLSKERTVTVFLDGDRGGDLILKEMLQVAEADFVARAPPGTEVEELTYKQIVKALRYKTPIDQYLSMHGMNDELKEYSQRNNLVFGSQPNNNHEAKAEVIEEPPEQPPKNEEIREEQSQQVTVQKEGFLDLLNPHEVSKRIEALAQLKMTEVYDSNGERIFSFPVSEAVERISQDPRGNTIVTGGIISQRLIDVSYNAGIKNIYGLKLGHITKKPVDINVIAWERSL.

The Toprim domain maps to 186–260 (DSIIVVEGRN…EADFVARAPP (75 aa)). The Mg(2+) site is built by Glu192, Asp234, and Asp236. The disordered stretch occupies residues 318–340 (AEVIEEPPEQPPKNEEIREEQSQ). Residues 329 to 338 (PKNEEIREEQ) show a composition bias toward basic and acidic residues.

The protein belongs to the archaeal DnaG primase family. In terms of assembly, forms a ternary complex with MCM helicase and DNA. Component of the archaeal exosome complex. Mg(2+) serves as cofactor.

It carries out the reaction ssDNA + n NTP = ssDNA/pppN(pN)n-1 hybrid + (n-1) diphosphate.. In terms of biological role, RNA polymerase that catalyzes the synthesis of short RNA molecules used as primers for DNA polymerase during DNA replication. Also part of the exosome, which is a complex involved in RNA degradation. Acts as a poly(A)-binding protein that enhances the interaction between heteromeric, adenine-rich transcripts and the exosome. This chain is DNA primase DnaG, found in Thermoplasma acidophilum (strain ATCC 25905 / DSM 1728 / JCM 9062 / NBRC 15155 / AMRC-C165).